A 415-amino-acid polypeptide reads, in one-letter code: Thylakoid ADP,ATP carrier protein, chloroplastic (415 aa).

A chloroplast-targeting transit peptide spans 1 to 61 (MGEEKSLLQF…NFASLSVAIR (61 aa)). The next 5 membrane-spanning stretches (helical) occupy residues 106-126 (IALL…AFAG), 182-207 (LPQV…KLFR), 219-239 (LGAG…LDVL), 273-293 (GPSL…FDLV), and 309-329 (LLTA…LDTI). Solcar repeat units lie at residues 113–205 (PKDA…YKKL), 213–296 (LSVL…VKKS), and 307–387 (SSLL…VKKL). Arginine 187 is a binding site for ADP. Residue arginine 330 participates in ADP binding. Residues 362 to 388 (GFVPNALKSMPNSSIKLTTFDIVKKLI) traverse the membrane as a helical segment.

The protein belongs to the mitochondrial carrier (TC 2.A.29) family. As to expression, highly expressed in developing photosynthetic organs such as leaves, flower buds and green siliques. Also detected in roots, flowers, mature leaves and stems.

The protein localises to the plastid. Its subcellular location is the chloroplast thylakoid membrane. The protein resides in the chloroplast envelope. KM and Vmax values toward ATP only are increased by m-chlorocarbonyl cyanide phenylhydrazone (CCCP). The corresponding values for ADP are not affected. Functionally, specifically transports adenine nucleotides. Involved in the uptake of ATP into thylakoids in exchange for lumenal ADP. The sequence is that of Thylakoid ADP,ATP carrier protein, chloroplastic (TAAC) from Arabidopsis thaliana (Mouse-ear cress).